A 505-amino-acid chain; its full sequence is Holliday junction branch migration ATPase PINA (505 aa).

In terms of domain architecture, PINc spans 2-106 (NDLMLDKSAL…IVTADETQKK (105 aa)). The tract at residues 434-505 (PVNRGITMSN…NIKIKIKLSD (72 aa)) is KH domain. The required for maximum interaction with Hjc and Hjm stretch occupies residues 493–505 (KKNNIKIKIKLSD).

As to quaternary structure, homohexamer; the central pore (25-31 Angstroms) is large enough to hold dsDNA. In PDB:5F4H two of the 6 subunits are in an ATP-binding competent conformation. Interacts with Holliday junction resolvase Hjc; in the presence of HJ DNA this interaction decreases branch migration but not Y-DNA unwinding. Interacts with helicase Hjm (hel308) which decreases the DNA helicase activity of Hjm. Requires Ca(2+) as cofactor.

It catalyses the reaction ATP + H2O = ADP + phosphate + H(+). Its function is as follows. Promotes Holliday junction (HJ) branch migration and unwinds Y-shaped DNA (but not replication forks or dsDNA) in an ATP hydrolysis-dependent manner. Stimulates cleavage by HJ resolvase Hjc. Unwinds Y-shaped and 3'-flap DNA substrates. In the absence of other proteins stabilizes replication forks (prevents spontaneous unwinding); Hjc, Hjm (Hel308) and PINA coordinate HJ migration and cleavage of replication forks in a coordinated way. Inhibits the 5'-3' (but not 3'-5') helicase activity of helicase Hjm (Hel308) on overhang DNA. Probably acts as an ATP-dependent pump that pulls DNA through the hexamer. The sequence is that of Holliday junction branch migration ATPase PINA from Saccharolobus islandicus (strain REY15A) (Sulfolobus islandicus).